The following is a 91-amino-acid chain: Defensin-like protein 82 (91 aa).

Positions 1–27 (MAIKKFSSLLLPLLMVLALVVLPIISG) are cleaved as a signal peptide. Disulfide bonds link Cys-34–Cys-72, Cys-41–Cys-62, Cys-47–Cys-70, and Cys-51–Cys-71.

The protein belongs to the DEFL family.

Its subcellular location is the secreted. This Arabidopsis thaliana (Mouse-ear cress) protein is Defensin-like protein 82.